Here is a 235-residue protein sequence, read N- to C-terminus: MTELARLKFYATQPHSCSYLPEEQATTLFLDPSQPMDVHVYADLSEMGFRRSGDHLYRPHCQNCNACVPARIPAARFIPNRQQRRILKRNADLTVTAARPAFKEEYFELYRRYIETRHADGDMYPPSRDQFSTFLVRDLPFCWFYEFRLEGRLMAVAVCDLLPNGLSAVYTFYEPDEDRRSLGRFAILWQITEALRQNLEAVYLGYWIKNCKKMNYKTQYRPIELLINQRWVTLN.

The protein belongs to the R-transferase family. Bpt subfamily.

The protein resides in the cytoplasm. The enzyme catalyses N-terminal L-glutamyl-[protein] + L-leucyl-tRNA(Leu) = N-terminal L-leucyl-L-glutamyl-[protein] + tRNA(Leu) + H(+). The catalysed reaction is N-terminal L-aspartyl-[protein] + L-leucyl-tRNA(Leu) = N-terminal L-leucyl-L-aspartyl-[protein] + tRNA(Leu) + H(+). Functions in the N-end rule pathway of protein degradation where it conjugates Leu from its aminoacyl-tRNA to the N-termini of proteins containing an N-terminal aspartate or glutamate. This Pseudomonas putida (strain ATCC 700007 / DSM 6899 / JCM 31910 / BCRC 17059 / LMG 24140 / F1) protein is Aspartate/glutamate leucyltransferase.